Reading from the N-terminus, the 64-residue chain is Hypoxia-inducible lipid droplet-associated protein (64 aa).

A required for targeting to lipid droplets region spans residues 1-37 (MKFMLNLYVLGIMLTLLSIFVRVMESLGGLLESPLPG). The helical transmembrane segment at 7-24 (LYVLGIMLTLLSIFVRVM) threads the bilayer. Residues 42 to 51 (TRGQLANTQP) are compositionally biased toward polar residues. Positions 42–64 (TRGQLANTQPPKGLPDHPSRGVQ) are disordered. Over residues 55 to 64 (LPDHPSRGVQ) the composition is skewed to basic and acidic residues.

It localises to the lipid droplet. It is found in the secreted. The protein localises to the membrane. In terms of biological role, increases intracellular lipid accumulation. Stimulates expression of cytokines including IL6, MIF and VEGFA. Enhances cell growth and proliferation. This is Hypoxia-inducible lipid droplet-associated protein (Hilpda) from Mus musculus (Mouse).